The chain runs to 774 residues: Lysyl oxidase homolog 2 (774 aa).

Residues 1–25 (MERPLCSHLCSCLAMLALLSPLSLA) form the signal peptide. SRCR domains lie at 58–159 (LRLA…VVCS), 188–302 (IRAI…VSCV), 326–425 (VRLR…VRCN), and 435–544 (LRLN…VACS). Intrachain disulfides connect Cys-84-Cys-148, Cys-97-Cys-158, Cys-128-Cys-138, Cys-218-Cys-291, Cys-231-Cys-301, Cys-265-Cys-275, Cys-351-Cys-414, Cys-364-Cys-424, and Cys-395-Cys-405. Asn-288 carries N-linked (GlcNAc...) asparagine glycosylation. An N-linked (GlcNAc...) (complex) asparagine glycan is attached at Asn-455. Cystine bridges form between Cys-464-Cys-530, Cys-477-Cys-543, and Cys-511-Cys-521. The tract at residues 548–751 (PDLVLNAEMV…WMYNCHIGGS (204 aa)) is lysyl-oxidase like. Ca(2+) is bound by residues Asp-549 and Leu-550. Intrachain disulfides connect Cys-573-Cys-625, Cys-579-Cys-695, Cys-657-Cys-673, and Cys-663-Cys-685. Residues His-626, His-628, and His-630 each contribute to the Cu cation site. Residue Asn-644 is glycosylated (N-linked (GlcNAc...) (complex) asparagine). Residues 653 to 689 (KASFCLEDTECEGDIQKNYECANFGDQGITMGCWDMY) constitute a cross-link (lysine tyrosylquinone (Lys-Tyr)). Residue Tyr-689 is modified to 2',4',5'-topaquinone. Ca(2+)-binding residues include Glu-722, Asp-724, Asn-727, and Asn-728. Cys-732 and Cys-746 are joined by a disulfide.

It belongs to the lysyl oxidase family. In terms of assembly, component of some chromatin repressor complex. Interacts with SNAI1. Interacts with TAF10. Interacts with HSPA5. Interacts with EFEMP2. The cofactor is Cu cation. It depends on lysine tyrosylquinone residue as a cofactor. Post-translationally, the lysine tyrosylquinone cross-link (LTQ) is generated by condensation of the epsilon-amino group of a lysine with a topaquinone produced by oxidation of tyrosine. N-glycosylated. N-glycosylation on Asn-455 and Asn-644 may be essential for proper folding and secretion; may be composed of a fucosylated carbohydrates attached to a trimannose N-linked glycan core. As to expression, expressed in many tissues. Highest expression in reproductive tissues, placenta, uterus and prostate. In esophageal epithelium, expressed in the basal, prickle and granular cell layers. Up-regulated in a number of cancers cells and tissues.

Its subcellular location is the secreted. The protein resides in the extracellular space. It is found in the extracellular matrix. The protein localises to the basement membrane. It localises to the nucleus. Its subcellular location is the chromosome. The protein resides in the endoplasmic reticulum. It carries out the reaction L-lysyl-[protein] + O2 + H2O = (S)-2-amino-6-oxohexanoyl-[protein] + H2O2 + NH4(+). Its activity is regulated as follows. According to some reports, it is inhibited by beta-aminopropionitrile (BAPN). According to another report, it is not inhibited by beta-aminopropionitrile (BAPN). Specifically inhibited by a mouse monoclonal antibody AB0023, inhibition occurs in a non-competitive manner. Its function is as follows. Mediates the post-translational oxidative deamination of lysine residues on target proteins leading to the formation of deaminated lysine (allysine). Acts as a transcription corepressor and specifically mediates deamination of trimethylated 'Lys-4' of histone H3 (H3K4me3), a specific tag for epigenetic transcriptional activation. Shows no activity against histone H3 when it is trimethylated on 'Lys-9' (H3K9me3) or 'Lys-27' (H3K27me3) or when 'Lys-4' is monomethylated (H3K4me1) or dimethylated (H3K4me2). Also mediates deamination of methylated TAF10, a member of the transcription factor IID (TFIID) complex, which induces release of TAF10 from promoters, leading to inhibition of TFIID-dependent transcription. LOXL2-mediated deamination of TAF10 results in transcriptional repression of genes required for embryonic stem cell pluripotency including POU5F1/OCT4, NANOG, KLF4 and SOX2. Involved in epithelial to mesenchymal transition (EMT) via interaction with SNAI1 and participates in repression of E-cadherin CDH1, probably by mediating deamination of histone H3. During EMT, involved with SNAI1 in negatively regulating pericentromeric heterochromatin transcription. SNAI1 recruits LOXL2 to pericentromeric regions to oxidize histone H3 and repress transcription which leads to release of heterochromatin component CBX5/HP1A, enabling chromatin reorganization and acquisition of mesenchymal traits. Interacts with the endoplasmic reticulum protein HSPA5 which activates the IRE1-XBP1 pathway of the unfolded protein response, leading to expression of several transcription factors involved in EMT and subsequent EMT induction. Involved in E-cadherin repression following hypoxia, a hallmark of EMT believed to amplify tumor aggressiveness, suggesting that it may play a role in tumor progression. When secreted into the extracellular matrix, promotes cross-linking of extracellular matrix proteins by mediating oxidative deamination of peptidyl lysine residues in precursors to fibrous collagen and elastin. Acts as a regulator of sprouting angiogenesis, probably via collagen IV scaffolding. Acts as a regulator of chondrocyte differentiation, probably by regulating expression of factors that control chondrocyte differentiation. This Homo sapiens (Human) protein is Lysyl oxidase homolog 2 (LOXL2).